The chain runs to 405 residues: Serine--glyoxylate aminotransferase (405 aa).

Position 196 is an N6-(pyridoxal phosphate)lysine (K196).

It belongs to the class-V pyridoxal-phosphate-dependent aminotransferase family. Pyridoxal 5'-phosphate is required as a cofactor.

The enzyme catalyses glyoxylate + L-serine = 3-hydroxypyruvate + glycine. The protein operates within one-carbon metabolism; formaldehyde assimilation via serine pathway. This Hyphomicrobium methylovorum protein is Serine--glyoxylate aminotransferase (sgaA).